The following is a 178-amino-acid chain: Histone H3-like centromeric protein CENH3 (178 aa).

The segment at 1–81 is disordered; the sequence is MARTKHRVTR…GSQKKSYRYR (81 aa). Residue K5 is modified to N6,N6,N6-trimethyllysine; alternate. K5 bears the N6,N6-dimethyllysine; alternate mark. K5 is subject to N6-methyllysine; alternate. Position 11 is a phosphoserine (S11). Residues 16-36 are compositionally biased toward low complexity; the sequence is QTDAAGASSSQAAGPTTTPTR. Over residues 43 to 56 the composition is skewed to polar residues; that stretch reads DNTQQTNPTTSPAT. An N6-methyllysine; alternate mark is found at K63 and K75. Residue K63 is modified to N6-acetyllysine; alternate. K75 carries the N6,N6,N6-trimethyllysine; alternate modification. K75 carries the post-translational modification N6,N6-dimethyllysine; alternate.

The protein belongs to the histone H3 family. Forms a nucleosome-like histone octamer containing two molecules each of H2A, H2B, CENH3 and H4 assembled in one CENH3-H4 heterotetramer and two H2A-H2B heterodimers. Interacts with ORTH2.

It is found in the chromosome. Its subcellular location is the centromere. It localises to the kinetochore. Functionally, histone H3-like variant which exclusively replaces conventional H3 in the nucleosome core of centromeric chromatin at the inner plate of the kinetochore. Required for recruitment and assembly of kinetochore proteins, mitotic progression and chromosome segregation. May serve as an epigenetic mark that propagates centromere identity through replication and cell division. This Arabidopsis thaliana (Mouse-ear cress) protein is Histone H3-like centromeric protein CENH3.